Reading from the N-terminus, the 238-residue chain is MGEPIYRRVVVKLSGEYFAGPQHYGIDQPTIDRVAGDLIAARGLGVEIAVVVGGGNIFRGVEVSARGVSRPTGDTMGMLATVMNCLALGEALRRHGQPARTFSALLMPEVCDLYTRAAAQQTLAEGGIALLAGGTGNPFFTTDTTAVLRAAEIDAGAVLKATNVDGVYTADPKRDPNAKRFERLTHSEALAGGYKVMDATAFALARETSLPIIVFSIAEPGSIGAVLGGAGRATVVAG.

12 to 15 (KLSG) contributes to the ATP binding site. Residue Gly-54 coordinates UMP. Gly-55 and Arg-59 together coordinate ATP. Residues Asp-74 and 135–142 (TGNPFFTT) contribute to the UMP site. ATP-binding residues include Thr-162, Asn-163, Tyr-168, and Asp-171.

Belongs to the UMP kinase family. As to quaternary structure, homohexamer.

The protein localises to the cytoplasm. The enzyme catalyses UMP + ATP = UDP + ADP. It participates in pyrimidine metabolism; CTP biosynthesis via de novo pathway; UDP from UMP (UMPK route): step 1/1. Inhibited by UTP. In terms of biological role, catalyzes the reversible phosphorylation of UMP to UDP. In Rhodopseudomonas palustris (strain HaA2), this protein is Uridylate kinase.